A 337-amino-acid polypeptide reads, in one-letter code: MSEESNEETKIIELEDIPGVGPETARKLREAGYSTIEAVAVASPSELANVGGITEGNAVKIIQAARKLANIGGFESGDKVLERRRSVKKITTGSKDLDELLGGGVETQAITEFFGEFGSGKTQICHQLAVNVQLPEDEGGLEGSVIIIDTENTFRPERIIQMAEAKGLDGNEVLKNIYVAQAYNSNHQMLLVDNAKELAEKLKKEGRPVRLIIVDSLMSHFRAEYVGRGTLADRQQKLNRHLHDLMKFGELYNAAIVVTNQVMARPDVLFGDPTKPVGGHIVAHTATFRIYLKKGKDDLRIARLIDSPHLPEGEAIFRVTERGIEDAEEKDKKKRKK.

An ATP-binding site is contributed by 115 to 122 (GEFGSGKT).

The protein belongs to the eukaryotic RecA-like protein family.

Functionally, involved in DNA repair and in homologous recombination. Binds and assemble on single-stranded DNA to form a nucleoprotein filament. Hydrolyzes ATP in a ssDNA-dependent manner and promotes DNA strand exchange between homologous DNA molecules. In Archaeoglobus fulgidus (strain ATCC 49558 / DSM 4304 / JCM 9628 / NBRC 100126 / VC-16), this protein is DNA repair and recombination protein RadA (radA).